The following is a 415-amino-acid chain: rRNA methyltransferase 3, mitochondrial (415 aa).

The N-terminal 47 residues, 1-47, are a transit peptide targeting the mitochondrion; sequence MAALCRGTVRACILKPLGLSVSLQVKRNVRALRRTPVRVLPAAEKGR. A disordered region spans residues 41-73; sequence PAAEKGRERKEVEARRPQQPRQSEYQTRTSQGV. Over residues 44 to 56 the composition is skewed to basic and acidic residues; that stretch reads EKGRERKEVEARR. Residues 59-73 are compositionally biased toward polar residues; the sequence is QPRQSEYQTRTSQGV. Residues G357, I381, and L390 each coordinate S-adenosyl-L-methionine.

It belongs to the class IV-like SAM-binding methyltransferase superfamily. RNA methyltransferase TrmH family.

The protein resides in the mitochondrion. It carries out the reaction a uridine in rRNA + S-adenosyl-L-methionine = a 2'-O-methyluridine in rRNA + S-adenosyl-L-homocysteine + H(+). S-adenosyl-L-methionine-dependent 2'-O-ribose methyltransferase that catalyzes the formation of 2'-O-methylguanosine at position 1370 (Gm1370) in the mitochondrial large subunit ribosomal RNA (mtLSU rRNA), a conserved modification in the peptidyl transferase domain of the mtLSU rRNA. Also required for formation of 2'-O-methyluridine at position 1369 (Um1369) mediated by MRM2. This chain is rRNA methyltransferase 3, mitochondrial, found in Xenopus tropicalis (Western clawed frog).